Consider the following 499-residue polypeptide: Probable malate:quinone oxidoreductase 4 (499 aa).

This sequence belongs to the MQO family. It depends on FAD as a cofactor.

It carries out the reaction (S)-malate + a quinone = a quinol + oxaloacetate. Its pathway is carbohydrate metabolism; tricarboxylic acid cycle; oxaloacetate from (S)-malate (quinone route): step 1/1. The chain is Probable malate:quinone oxidoreductase 4 from Staphylococcus epidermidis (strain ATCC 35984 / DSM 28319 / BCRC 17069 / CCUG 31568 / BM 3577 / RP62A).